The sequence spans 365 residues: uncharacterized protein (365 aa).

Topologically, residues 1 to 133 (MVLAKQWVLK…RKLDKNKVGK (133 aa)) are cytoplasmic. Residues 134–154 (LWWYLSVLGGTSLTAYFIFFT) form a helical membrane-spanning segment. Residues 155-169 (YAQLQEREEDYGKVY) are Extracellular-facing. A helical transmembrane segment spans residues 170-190 (LISGAAGAVGTVCIQLALNVF). The Cytoplasmic portion of the chain corresponds to 191–365 (KASKVIAIAG…KLITKVNNEE (175 aa)).

It localises to the membrane. This is an uncharacterized protein from Saccharomyces cerevisiae (strain ATCC 204508 / S288c) (Baker's yeast).